A 569-amino-acid chain; its full sequence is MTLSDEDKITIEKFALQNAVKYGKAPQLGAVMGKVMGLCPHLRPLSKEVGPVIQHVLDEVMKEVPEEWQARLEVIAPELIEELNTKKEPDKGLKPLDVKEGESVVMRFAPNPNGPPTLGSTRGIVVNSEYVKRYGGKFIIRFDDTDPQTKRPMLEAYDWYLEDCEWLDAKPDEVVIASDNMEVYYDYARQLLEMGHAYVCFCEGGDFKKFKDAKEPCPHRGHAPEVNLEHWDKMLAGEYEEKAAVVRIKTDIEHKDPAMRDFGAFRIVKTAHPRPEVDDKYVVWPLLDFEGAIEDHVLGMTHIIRGKDLMDSEKRQGYIYNYLGWEYPKTTHWGRVKMHEFGKFSTSGLRQSIEDGEYSGWDDPRLPTLRALRRRGIKPEAIRKFMIDMGVGETDVSLSMDTLYAENRKIIDTIANRYFFVWDPVELEVEDAVCCTVNPSLHPSEDRGVRCIDIGSKLLVCKSDVESAELGDMLRMKYLYNIEITSVSPLKCKCIGDSMEDAKSNKMRIIHWVPEDGIPVKVLAPQGEFIGMGEKQIVDELDNVVQFERFGFCRIDSVDDGVVAYFTHK.

The short motif at Pro110–Ser120 is the 'HIGH' region element.

It belongs to the class-I aminoacyl-tRNA synthetase family. Glutamate--tRNA ligase type 2 subfamily.

It localises to the cytoplasm. It catalyses the reaction tRNA(Glu) + L-glutamate + ATP = L-glutamyl-tRNA(Glu) + AMP + diphosphate. Its function is as follows. Catalyzes the attachment of glutamate to tRNA(Glu) in a two-step reaction: glutamate is first activated by ATP to form Glu-AMP and then transferred to the acceptor end of tRNA(Glu). This chain is Glutamate--tRNA ligase, found in Methanococcoides burtonii (strain DSM 6242 / NBRC 107633 / OCM 468 / ACE-M).